Consider the following 346-residue polypeptide: Rhomboid protein 1, mitochondrial (346 aa).

A mitochondrion-targeting transit peptide spans 1–73 (MSGVSSVMLG…RFFSQTSILK (73 aa)). 6 consecutive transmembrane segments (helical) span residues 109-129 (SMTI…PYLF), 145-165 (LVYA…LPKC), 203-223 (MLAL…SNFF), 246-266 (LAIV…LGCF), 275-295 (ILLF…ASVA), and 308-328 (FDYA…WYIS). Ser-256 functions as the Nucleophile in the catalytic mechanism. Residue His-313 is part of the active site.

Belongs to the peptidase S54 family.

Its subcellular location is the mitochondrion inner membrane. The catalysed reaction is Cleaves type-1 transmembrane domains using a catalytic dyad composed of serine and histidine that are contributed by different transmembrane domains.. Mitochondrial rhomboid serine protease processing the mitochondrial membrane fusion regulator MGM1, and the cytochrome c peroxidase (CCP1). Required for TIM11 stability, ATP synthase complex assembly, mitochondrial morphology, cytochrome c (CYC1) storage and mitochondrial genome maintenance. The chain is Rhomboid protein 1, mitochondrial (PCP1) from Saccharomyces cerevisiae (strain ATCC 204508 / S288c) (Baker's yeast).